The sequence spans 573 residues: Developmental and secondary metabolism regulator veA (573 aa).

Residues 1–11 (MATLAAPPPPL) are compositionally biased toward pro residues. Disordered regions lie at residues 1–24 (MATL…SRIT) and 39–63 (QPKR…DPPP). The region spanning 27-230 (GKKITYKLNI…AEQGCRVRIR (204 aa)) is the Velvet domain. Residues 41–46 (KRARAC) carry the Nuclear localization signal motif. Phosphothreonine is present on residues T167 and T170. At S183 the chain carries Phosphoserine. 3 disordered regions span residues 236–295 (RRRG…RRPS), 307–367 (YQRP…SYQS), and 384–573 (SHIP…ATMR). Residues 241–260 (KRTEDYDYDNERGYNNRRPD) show a composition bias toward basic and acidic residues. At Y254 the chain carries Phosphotyrosine. Pro residues-rich tracts occupy residues 318-339 (SSTP…PSTP) and 347-361 (PAPP…PPLH). Positions 387–412 (PQQTTTPTHPYSPRSSISHSRNQSIS) are enriched in low complexity. Positions 452-493 (PSVNSRSKTPSNMITSLPPIQSLSELPSTTSQPSSAIGSSPA) are enriched in polar residues. Residues 459–498 (KTPSNMITSLPPIQSLSELPSTTSQPSSAIGSSPANEPGP) form a PEST region. The segment covering 510–522 (RTYEESFGHDDRP) has biased composition (basic and acidic residues).

Belongs to the velvet family. VeA subfamily. As to quaternary structure, component of the heterotrimeric velvet complex composed of laeA, veA and velB; VeA acting as a bridging protein between laeA and velB. Interacts with the light-sensing phytochrome fphA. Interacts with llmF. Post-translationally, phosphorylated at Thr-167, Thr-170, Ser-183 and Tyr-254. Thr-167 should be phosphorylated and T170 and S183 should be dephosphorylated to achieve light induction of conidiation. Phosphorylation of Ser-183 and Tyr-254 influence sterigmatocystin production in a light-independent manner. Phosphorylation of Thr-167 and Thr-170 modulates expression of veA.

It is found in the nucleus. It localises to the cytoplasm. Its function is as follows. Component of the velvet transcription factor complex that controls sexual/asexual developmental ratio in response to light, promoting sexual development in the darkness while stimulating asexual sporulation under illumination. The velvet complex acts as a global regulator for secondary metabolite gene expression. Controls the expression of the sterigmatocystin and penicillin gene clusters. Represses the cryptic ors gene cluster producing orsellinic acid and its F9775 derivatives in a laeA-independent manner. Required for full induction of faoA gene expression by fructosyl amines. Positively regulates the expression of the early sexual development gene esdC. Controls the expression of mannoprotein mnpA. The sequence is that of Developmental and secondary metabolism regulator veA from Emericella nidulans (strain FGSC A4 / ATCC 38163 / CBS 112.46 / NRRL 194 / M139) (Aspergillus nidulans).